Consider the following 114-residue polypeptide: ATP synthase subunit beta, mitochondrial (114 aa).

Residue 44 to 51 (GGAGVGKT) participates in ATP binding.

This sequence belongs to the ATPase alpha/beta chains family. As to quaternary structure, F-type ATPases have 2 components, CF(1) - the catalytic core - and CF(0) - the membrane proton channel. CF(1) has five subunits: alpha(3), beta(3), gamma(1), delta(1), epsilon(1). CF(0) has three main subunits: a, b and c.

It localises to the mitochondrion. Its subcellular location is the mitochondrion inner membrane. The enzyme catalyses ATP + H2O + 4 H(+)(in) = ADP + phosphate + 5 H(+)(out). Mitochondrial membrane ATP synthase (F(1)F(0) ATP synthase or Complex V) produces ATP from ADP in the presence of a proton gradient across the membrane which is generated by electron transport complexes of the respiratory chain. F-type ATPases consist of two structural domains, F(1) - containing the extramembraneous catalytic core, and F(0) - containing the membrane proton channel, linked together by a central stalk and a peripheral stalk. During catalysis, ATP synthesis in the catalytic domain of F(1) is coupled via a rotary mechanism of the central stalk subunits to proton translocation. Subunits alpha and beta form the catalytic core in F(1). Rotation of the central stalk against the surrounding alpha(3)beta(3) subunits leads to hydrolysis of ATP in three separate catalytic sites on the beta subunits. This chain is ATP synthase subunit beta, mitochondrial (atp2), found in Penicillium glabrum (Penicillium frequentans).